A 184-amino-acid chain; its full sequence is NADH-quinone oxidoreductase subunit B (184 aa).

C63, C64, C128, and C158 together coordinate [4Fe-4S] cluster.

Belongs to the complex I 20 kDa subunit family. In terms of assembly, NDH-1 is composed of 14 different subunits. Subunits NuoB, C, D, E, F, and G constitute the peripheral sector of the complex. [4Fe-4S] cluster serves as cofactor.

The protein localises to the cell inner membrane. The enzyme catalyses a quinone + NADH + 5 H(+)(in) = a quinol + NAD(+) + 4 H(+)(out). Its function is as follows. NDH-1 shuttles electrons from NADH, via FMN and iron-sulfur (Fe-S) centers, to quinones in the respiratory chain. Couples the redox reaction to proton translocation (for every two electrons transferred, four hydrogen ions are translocated across the cytoplasmic membrane), and thus conserves the redox energy in a proton gradient. This chain is NADH-quinone oxidoreductase subunit B, found in Stenotrophomonas maltophilia (strain R551-3).